Reading from the N-terminus, the 138-residue chain is Brain natriuretic peptide (138 aa).

Positions 1–22 are cleaved as a signal peptide; that stretch reads MRLSSMWLCSLLLILKLQLSST. Disordered regions lie at residues 50 to 84 and 99 to 138; these read EQMA…AGLD and SVRN…PKQR. Residues Cys-111 and Cys-127 are joined by a disulfide bond.

This sequence belongs to the natriuretic peptide family.

It is found in the secreted. Its function is as follows. Cardiac hormone which may function as a paracrine antifibrotic factor in the heart. Also plays a key role in cardiovascular homeostasis through natriuresis, diuresis, vasorelaxation, and inhibition of renin and aldosterone secretion. The chain is Brain natriuretic peptide (nppb) from Oreochromis mossambicus (Mozambique tilapia).